We begin with the raw amino-acid sequence, 434 residues long: ATP phosphoribosyltransferase regulatory subunit (434 aa).

It belongs to the class-II aminoacyl-tRNA synthetase family. HisZ subfamily. Heteromultimer composed of HisG and HisZ subunits.

It is found in the cytoplasm. It participates in amino-acid biosynthesis; L-histidine biosynthesis; L-histidine from 5-phospho-alpha-D-ribose 1-diphosphate: step 1/9. Its function is as follows. Required for the first step of histidine biosynthesis. May allow the feedback regulation of ATP phosphoribosyltransferase activity by histidine. This chain is ATP phosphoribosyltransferase regulatory subunit, found in Geobacter metallireducens (strain ATCC 53774 / DSM 7210 / GS-15).